A 125-amino-acid polypeptide reads, in one-letter code: Glutaredoxin-C1 (125 aa).

The Glutaredoxin domain maps to valine 19–alanine 119. A disulfide bridge connects residues cysteine 39 and cysteine 42.

This sequence belongs to the glutaredoxin family. CPYC subfamily.

The protein localises to the cytoplasm. In terms of biological role, has a glutathione-disulfide oxidoreductase activity in the presence of NADPH and glutathione reductase. Reduces low molecular weight disulfides and proteins. The polypeptide is Glutaredoxin-C1 (GRXC1) (Arabidopsis thaliana (Mouse-ear cress)).